Here is a 282-residue protein sequence, read N- to C-terminus: 3-methyl-2-oxobutanoate hydroxymethyltransferase (282 aa).

Mg(2+)-binding residues include Asp-44 and Asp-83. 3-methyl-2-oxobutanoate contacts are provided by residues 44–45, Asp-83, and Lys-113; that span reads DS. Glu-115 lines the Mg(2+) pocket. The Proton acceptor role is filled by Glu-182.

The protein belongs to the PanB family. As to quaternary structure, homodecamer; pentamer of dimers. Mg(2+) is required as a cofactor.

Its subcellular location is the cytoplasm. It carries out the reaction 3-methyl-2-oxobutanoate + (6R)-5,10-methylene-5,6,7,8-tetrahydrofolate + H2O = 2-dehydropantoate + (6S)-5,6,7,8-tetrahydrofolate. It participates in cofactor biosynthesis; (R)-pantothenate biosynthesis; (R)-pantoate from 3-methyl-2-oxobutanoate: step 1/2. In terms of biological role, catalyzes the reversible reaction in which hydroxymethyl group from 5,10-methylenetetrahydrofolate is transferred onto alpha-ketoisovalerate to form ketopantoate. The polypeptide is 3-methyl-2-oxobutanoate hydroxymethyltransferase (Dehalococcoides mccartyi (strain ATCC BAA-2266 / KCTC 15142 / 195) (Dehalococcoides ethenogenes (strain 195))).